Here is a 901-residue protein sequence, read N- to C-terminus: Core protein VP3 (901 aa).

The protein belongs to the orbivirus VP3 family.

The protein resides in the virion. In terms of biological role, the VP3 protein is one of the five proteins (with VP1, VP4, VP6 and VP7) which form the inner capsid of the virus. The protein is Core protein VP3 (Segment-3) of Bluetongue virus 11 (isolate USA) (BTV 11).